The sequence spans 122 residues: Large ribosomal subunit protein uL14 (122 aa).

Belongs to the universal ribosomal protein uL14 family. Part of the 50S ribosomal subunit. Forms a cluster with proteins L3 and L19. In the 70S ribosome, L14 and L19 interact and together make contacts with the 16S rRNA in bridges B5 and B8.

Functionally, binds to 23S rRNA. Forms part of two intersubunit bridges in the 70S ribosome. The sequence is that of Large ribosomal subunit protein uL14 from Spiroplasma citri.